We begin with the raw amino-acid sequence, 299 residues long: MGTKAQVERKLLCLFILAILLCSLALGSVTVHSSEPEVRIPENNPVKLSCAYSGFSSPRVEWKFDQGDTTRLVCYNNKITASYEDRVTFLPTGITFKSVTREDTGTYTCMVSEEGGNSYGEVKVKLIVLVPPSKPTVNIPSSATIGNRAVLTCSEQDGSPPSEYTWFKDGIVMPTNPKSTRAFSNSSYVLNPTTGELVFDPLSASDTGEYSCEARNGYGTPMTSNAVRMEAVERNVGVIVAAVLVTLILLGILVFGIWFAYSRGHFDRTKKGTSSKKVIYSQPSARSEGEFKQTSSFLV.

The first 27 residues, 1–27 (MGTKAQVERKLLCLFILAILLCSLALG), serve as a signal peptide directing secretion. Ig-like V-type domains lie at 28-125 (SVTV…VKVK) and 135-228 (PTVN…NAVR). Topologically, residues 28–238 (SVTVHSSEPE…MEAVERNVGV (211 aa)) are extracellular. 2 disulfides stabilise this stretch: Cys-50–Cys-109 and Cys-153–Cys-212. Asn-185 carries N-linked (GlcNAc...) asparagine glycosylation. Residues 239-259 (IVAAVLVTLILLGILVFGIWF) form a helical membrane-spanning segment. The Cytoplasmic segment spans residues 260 to 299 (AYSRGHFDRTKKGTSSKKVIYSQPSARSEGEFKQTSSFLV). Ser-281, Ser-284, and Ser-287 each carry phosphoserine.

Belongs to the immunoglobulin superfamily. Interacts with the ninth PDZ domain of MPDZ. Interacts with the first PDZ domain of PARD3. The association between PARD3 and PARD6B probably disrupts this interaction. Interacts with ITGAL (via I-domain). Interacts with CD151. In terms of assembly, (Microbial infection) Interacts with Mammalian reovirus sigma-1 capsid protein. As to quaternary structure, (Microbial infection) Interacts with Human Rotavirus strain Wa vp4 capsid protein. Post-translationally, N-glycosylated. (Microbial infection) Cleaved by H.pylori virulence factor PqqE. Cleavage leads to altered tight junction functions. In terms of tissue distribution, expressed in endothelium, epithelium and leukocytes (at protein level).

The protein localises to the cell junction. It is found in the tight junction. Its subcellular location is the cell membrane. Functionally, seems to play a role in epithelial tight junction formation. Appears early in primordial forms of cell junctions and recruits PARD3. The association of the PARD6-PARD3 complex may prevent the interaction of PARD3 with JAM1, thereby preventing tight junction assembly. Plays a role in regulating monocyte transmigration involved in integrity of epithelial barrier. Ligand for integrin alpha-L/beta-2 involved in memory T-cell and neutrophil transmigration. Involved in platelet activation. In terms of biological role, (Microbial infection) Acts as a receptor for Mammalian reovirus sigma-1. Its function is as follows. (Microbial infection) Acts as a receptor for Human Rotavirus strain Wa. The protein is Junctional adhesion molecule A (F11R) of Homo sapiens (Human).